A 149-amino-acid polypeptide reads, in one-letter code: Transcriptional repressor NrdR (149 aa).

A zinc finger spans residues 3-34 (CPFCDTEETKVIDSRLVSDGYQVRRRRECGHC). The ATP-cone domain occupies 49-139 (PKIIKTDGTR…VYLSFDDIDQ (91 aa)).

Belongs to the NrdR family. The cofactor is Zn(2+).

Its function is as follows. Negatively regulates transcription of bacterial ribonucleotide reductase nrd genes and operons by binding to NrdR-boxes. This chain is Transcriptional repressor NrdR, found in Haemophilus influenzae (strain 86-028NP).